Reading from the N-terminus, the 323-residue chain is Chitin-binding lectin 1 (323 aa).

Residues 1–22 form the signal peptide; it reads MKETAISVLALLTLFLLEVVSA. P50, P51, P53, and P55 each carry 4-hydroxyproline. 4 O-linked (Ara...) hydroxyproline glycosylation sites follow: P50, P51, P53, and P55. Chitin-binding type-1 domains lie at 58-101 and 105-149; these read YPQC…QCPG and EGRC…QCKL. 8 cysteine pairs are disulfide-bonded: C61–C77, C70–C83, C76–C90, C95–C99, C108–C125, C117–C131, C124–C138, and C143–C147. 4 residues coordinate chitin: S78, W80, W82, and Y89. The segment at 150–210 is extensin-like; sequence PSPPPPPPPP…PPPPPPALPY (61 aa). Residue S151 is glycosylated (O-linked (Gal) serine). 10 repeat units span residues 151 to 159, 160 to 164, 165 to 167, 168 to 172, 173 to 180, 181 to 185, 186 to 190, 191 to 192, 193 to 198, and 200 to 206. The 10 X approximate repeats of S-P-P-P-P stretch occupies residues 151-206; that stretch reads SPPPPPPPPSPPPPSPPSPPPPSPPPPPPPSPPPPSPPPPSPSPPPPPASPPPPPP. P152, P153, P154, P155, P156, P157, P158, and P159 each carry 4-hydroxyproline. Residues P152, P153, P154, P155, P156, P157, P158, and P159 are each glycosylated (O-linked (Ara...) hydroxyproline). The tract at residues 154–203 is disordered; the sequence is PPPPPPSPPPPSPPSPPPPSPPPPPPPSPPPPSPPPPSPSPPPPPASPPP. O-linked (Gal) serine glycosylation occurs at S160. 4 positions are modified to 4-hydroxyproline: P161, P162, P163, and P164. P161, P162, P163, and P164 each carry an O-linked (Ara...) hydroxyproline glycan. O-linked (Gal) serine glycosylation is present at S165. Residues P166 and P167 each carry the 4-hydroxyproline modification. P166 and P167 each carry an O-linked (Ara...) hydroxyproline glycan. An O-linked (Gal) serine glycan is attached at S168. 4-hydroxyproline occurs at positions 169, 170, 171, and 172. 4 O-linked (Ara...) hydroxyproline glycosylation sites follow: P169, P170, P171, and P172. A glycan (O-linked (Gal) serine) is linked at S173. Residues P174, P175, P176, P177, P178, P179, and P180 each carry the 4-hydroxyproline modification. O-linked (Ara...) hydroxyproline glycans are attached at residues P174, P175, P176, P177, P178, P179, and P180. S181 carries O-linked (Gal) serine glycosylation. A 4-hydroxyproline mark is found at P182, P183, P184, and P185. P182, P183, P184, and P185 each carry an O-linked (Ara...) hydroxyproline glycan. The O-linked (Gal) serine glycan is linked to S186. 4-hydroxyproline occurs at positions 187, 188, 189, and 190. 4 O-linked (Ara...) hydroxyproline glycosylation sites follow: P187, P188, P189, and P190. An O-linked (Gal) serine glycan is attached at S191. A 4-hydroxyproline modification is found at P192. P192 is a glycosylation site (O-linked (Ara...) hydroxyproline). S193 carries an O-linked (Gal) serine glycan. A 4-hydroxyproline mark is found at P194, P195, P196, P197, and P198. P194, P195, P196, P197, and P198 each carry an O-linked (Ara...) hydroxyproline glycan. A glycan (O-linked (Gal) serine) is linked at S200. 4-hydroxyproline occurs at positions 201, 202, 203, 204, 205, 206, and 209. P201, P202, P203, P204, P205, P206, and P209 each carry an O-linked (Ara...) hydroxyproline glycan. Chitin-binding type-1 domains are found at residues 210 to 253 and 257 to 301; these read YPQC…QCPG and EGRC…QCNT. 8 disulfides stabilise this stretch: C213–C229, C222–C235, C228–C242, C247–C251, C260–C277, C269–C283, C276–C290, and C295–C299. 4 residues coordinate chitin: S230, W232, W234, and Y241.

This sequence in the central section; belongs to the extensin family. As to quaternary structure, homodimer. Post-translationally, heavily glycosylated with beta-arabinose on hydroxyprolines and with alpha-galactose on serines of the extensin-like domain. As no other sugars could be detected in the native lectin, it is unlikely that the three putative N-glycosylation sites are actually glycosylated. In terms of processing, the N-terminus is blocked. The N-terminal sequences proposed in PubMed:9022287 and PubMed:11056399 originate probably from truncated proteins.

Its function is as follows. This protein might function as a defense against chitin containing pathogens. Binds to several branched or linear N-acetyllactosamine-containing glycosphingolipids and also to lactosylceramide with sphingosine and non-hydroxy fatty acids. The chain is Chitin-binding lectin 1 from Solanum tuberosum (Potato).